The chain runs to 227 residues: Probable septum site-determining protein MinC (227 aa).

Belongs to the MinC family. In terms of assembly, interacts with MinD and FtsZ.

Functionally, cell division inhibitor that blocks the formation of polar Z ring septums. Rapidly oscillates between the poles of the cell to destabilize FtsZ filaments that have formed before they mature into polar Z rings. Prevents FtsZ polymerization. The polypeptide is Probable septum site-determining protein MinC (Clostridioides difficile (strain 630) (Peptoclostridium difficile)).